The primary structure comprises 355 residues: UDP-3-O-acylglucosamine N-acyltransferase (355 aa).

The active-site Proton acceptor is the His258.

The protein belongs to the transferase hexapeptide repeat family. LpxD subfamily. In terms of assembly, homotrimer.

The catalysed reaction is a UDP-3-O-[(3R)-3-hydroxyacyl]-alpha-D-glucosamine + a (3R)-hydroxyacyl-[ACP] = a UDP-2-N,3-O-bis[(3R)-3-hydroxyacyl]-alpha-D-glucosamine + holo-[ACP] + H(+). The protein operates within bacterial outer membrane biogenesis; LPS lipid A biosynthesis. Its function is as follows. Catalyzes the N-acylation of UDP-3-O-acylglucosamine using 3-hydroxyacyl-ACP as the acyl donor. Is involved in the biosynthesis of lipid A, a phosphorylated glycolipid that anchors the lipopolysaccharide to the outer membrane of the cell. In Agrobacterium fabrum (strain C58 / ATCC 33970) (Agrobacterium tumefaciens (strain C58)), this protein is UDP-3-O-acylglucosamine N-acyltransferase.